Reading from the N-terminus, the 660-residue chain is Histone deacetylase 5 (660 aa).

N-acetylalanine is present on Ala-2. Residues 26–349 are histone deacetylase; that stretch reads KVGLIYDETM…SLACVQVLLE (324 aa). His-158 functions as the Proton donor/acceptor in the catalytic mechanism. The Zn(2+) site is built by Asp-198, His-200, and Asp-291.

The protein belongs to the histone deacetylase family. HD type 2 subfamily. As to quaternary structure, interacts with HDA6. Requires Zn(2+) as cofactor. As to expression, expressed in stems, leaves, flowers, siliques and mature seeds.

It localises to the nucleus. The protein resides in the cytoplasm. It catalyses the reaction N(6)-acetyl-L-lysyl-[histone] + H2O = L-lysyl-[histone] + acetate. With respect to regulation, inhibited by trichostatin A (TSA), a well-known histone deacetylase inhibitor. Responsible for the deacetylation of lysine residues on the N-terminal part of the core histones (H2A, H2B, H3 and H4). Histone deacetylation gives a tag for epigenetic repression and plays an important role in transcriptional regulation, cell cycle progression and developmental events. Histone deacetylases act via the formation of large multiprotein complexes. Involved in the regulation of flowering time by repressing FLC and AGL27/MAF1 expression. Forms a histone deacetylase complex with HDA6, FLD and MSI4/FVE that represses FLC gene expression to control flowering time. Unlike its tandem duplication HDA18, HDA5 does not seem to be required for the cellular patterning in the root epidermis. The sequence is that of Histone deacetylase 5 from Arabidopsis thaliana (Mouse-ear cress).